A 396-amino-acid chain; its full sequence is MLLKPHSRVQVFEGAEDNLPDRDALRAALAIRQLAEGLTADDLLLVLISGGGSALLPAPIPPVTLEEKQTLTRLLAARGATIQELNTIRKALSQLKGGGLAQAAYPAQVVSLILSDVVGDPVEVIASGPTVASSHSVQDCLHILNRYGLRAALPRSVKTVLSRADSDPHGPRTCGHVLNVIIGSNVLALAEAQRQAEALGYQAVVLSAAMQGDVKSMAQFYGLLAHVARTRLTPSTAGASVEEDAQLHELAAELQIPDLQLEEALETMARGRGPVCLLAGGEPTVQLQGSGRGGRNQELALRVGAELRRWPLGQIDVLFLSGGTDGQDGPTEAAGAWVTPELASQAAAEGLDMATFLAHNDSHTFFCRLQGGAHLLHTGMTGTNVMDTHLLFLRPR.

The protein belongs to the glycerate kinase type-2 family.

The protein resides in the cytoplasm. The enzyme catalyses (R)-glycerate + ATP = (2R)-3-phosphoglycerate + ADP + H(+). The sequence is that of Glycerate kinase (GLYCTK) from Macaca fascicularis (Crab-eating macaque).